Consider the following 396-residue polypeptide: NADH-quinone oxidoreductase subunit D (396 aa).

This sequence belongs to the complex I 49 kDa subunit family. As to quaternary structure, NDH-1 is composed of 14 different subunits. Subunits NuoB, C, D, E, F, and G constitute the peripheral sector of the complex.

Its subcellular location is the cell inner membrane. The catalysed reaction is a quinone + NADH + 5 H(+)(in) = a quinol + NAD(+) + 4 H(+)(out). In terms of biological role, NDH-1 shuttles electrons from NADH, via FMN and iron-sulfur (Fe-S) centers, to quinones in the respiratory chain. The immediate electron acceptor for the enzyme in this species is believed to be ubiquinone. Couples the redox reaction to proton translocation (for every two electrons transferred, four hydrogen ions are translocated across the cytoplasmic membrane), and thus conserves the redox energy in a proton gradient. This Rhodopseudomonas palustris (strain BisB18) protein is NADH-quinone oxidoreductase subunit D.